Here is a 396-residue protein sequence, read N- to C-terminus: Acetate kinase (396 aa).

Residue Asn7 coordinates Mg(2+). Residue Lys14 coordinates ATP. Residue Arg86 coordinates substrate. The active-site Proton donor/acceptor is the Asp143. ATP is bound by residues 203–207 (HLGNG), 277–279 (DMR), and 325–329 (GIGEH). Glu380 is a binding site for Mg(2+).

This sequence belongs to the acetokinase family. Homodimer. Requires Mg(2+) as cofactor. The cofactor is Mn(2+).

It localises to the cytoplasm. It carries out the reaction acetate + ATP = acetyl phosphate + ADP. It participates in metabolic intermediate biosynthesis; acetyl-CoA biosynthesis; acetyl-CoA from acetate: step 1/2. Its function is as follows. Catalyzes the formation of acetyl phosphate from acetate and ATP. Can also catalyze the reverse reaction. The chain is Acetate kinase from Sulfurovum sp. (strain NBC37-1).